A 431-amino-acid chain; its full sequence is Chaperone SurA (431 aa).

The signal sequence occupies residues 1-20 (MKNWRTLILGLALSASTAFA). PpiC domains lie at 171–272 (NDEL…KVND) and 282–382 (VTET…QLLD).

It localises to the periplasm. The enzyme catalyses [protein]-peptidylproline (omega=180) = [protein]-peptidylproline (omega=0). In terms of biological role, chaperone involved in the correct folding and assembly of outer membrane proteins. Recognizes specific patterns of aromatic residues and the orientation of their side chains, which are found more frequently in integral outer membrane proteins. May act in both early periplasmic and late outer membrane-associated steps of protein maturation. This Pectobacterium atrosepticum (strain SCRI 1043 / ATCC BAA-672) (Erwinia carotovora subsp. atroseptica) protein is Chaperone SurA.